The chain runs to 70 residues: Biotin carboxyl carrier protein of acetyl-CoA carboxylase (70 aa).

The region spanning 1 to 69 (GTVVAPMVGL…QDGIKLFALK (69 aa)) is the Biotinyl-binding domain. The residue at position 35 (Lys35) is an N6-biotinyllysine.

The protein localises to the plastid. The protein resides in the chloroplast. It participates in lipid metabolism; fatty acid biosynthesis. This protein is a component of the acetyl coenzyme A carboxylase complex; first, biotin carboxylase catalyzes the carboxylation of the carrier protein and then the transcarboxylase transfers the carboxyl group to form malonyl-CoA. This Solanum lycopersicum (Tomato) protein is Biotin carboxyl carrier protein of acetyl-CoA carboxylase.